The chain runs to 77 residues: MESFFNNTFATLIAYIGIIFTYLLVIPLLLFYWMNNRWNIMGKFERLGIYGLVFLFFPGLILFSPFLNLRLKGSGKG.

2 consecutive transmembrane segments (helical) span residues 12–32 (LIAY…LLFY) and 47–67 (LGIY…SPFL).

This sequence belongs to the complex I NdhL subunit family. As to quaternary structure, NDH-1 can be composed of about 15 different subunits; different subcomplexes with different compositions have been identified which probably have different functions.

The protein localises to the cellular thylakoid membrane. It catalyses the reaction a plastoquinone + NADH + (n+1) H(+)(in) = a plastoquinol + NAD(+) + n H(+)(out). The catalysed reaction is a plastoquinone + NADPH + (n+1) H(+)(in) = a plastoquinol + NADP(+) + n H(+)(out). NDH-1 shuttles electrons from an unknown electron donor, via FMN and iron-sulfur (Fe-S) centers, to quinones in the respiratory and/or the photosynthetic chain. The immediate electron acceptor for the enzyme in this species is believed to be plastoquinone. Couples the redox reaction to proton translocation, and thus conserves the redox energy in a proton gradient. Cyanobacterial NDH-1 also plays a role in inorganic carbon-concentration. This is NAD(P)H-quinone oxidoreductase subunit L from Prochlorococcus marinus (strain AS9601).